A 525-amino-acid polypeptide reads, in one-letter code: Cytochrome P450 monooxygenase tpcC (525 aa).

A helical membrane pass occupies residues 13–33 (LPVTLVSLLVGSIFYFCYLTV). Cysteine 457 lines the heme pocket.

This sequence belongs to the cytochrome P450 family. Heme is required as a cofactor.

It localises to the membrane. Its pathway is secondary metabolite biosynthesis; terpenoid biosynthesis. In terms of biological role, cytochrome P450 monooxygenase; part of the gene cluster that mediates the biosynthesis of terpestacin. The bifunctional terpene synthase tpcA converts isopentenyl diphosphate (IPP) and dimethylallyl diphosphate (DMAPP) into the sesterterpene preterpestacin I. The C-terminal prenyltransferase (PT) domain of tpcA catalyzes formation of GFPP, whereas the N-terminal terpene cyclase (TC) domain catalyzes the cyclization of GFPP into preterpestacin I. The cytochrome P450 monooxygenase tpcB then hydroxylates preterpestacin I to yield 24-hydroxypreterpstacin I (renamed as preterpestacin II) whereas the cytochrome P450 monooxygenase tpcC further hydroxylates preterpestacin II to yield 16,17-dihydroxypreterpestacin II (renamed as preterpestacin III). Finally, the FAD-dependent monooxygenase tpcD converts preterpestacin III into terpestacin. The protein is Cytochrome P450 monooxygenase tpcC of Cochliobolus heterostrophus (strain C5 / ATCC 48332 / race O) (Southern corn leaf blight fungus).